The chain runs to 241 residues: Probable transcriptional regulatory protein NE0210 (241 aa).

Belongs to the TACO1 family.

It localises to the cytoplasm. The polypeptide is Probable transcriptional regulatory protein NE0210 (Nitrosomonas europaea (strain ATCC 19718 / CIP 103999 / KCTC 2705 / NBRC 14298)).